The primary structure comprises 63 residues: 2-hydroxymuconate tautomerase (63 aa).

Catalysis depends on Pro-2, which acts as the Proton acceptor; via imino nitrogen.

This sequence belongs to the 4-oxalocrotonate tautomerase family. Homohexamer.

The catalysed reaction is (2Z,4E)-2-hydroxyhexa-2,4-dienedioate = (3E)-2-oxohex-3-enedioate. Its pathway is aromatic compound metabolism; salicylate degradation. Its function is as follows. Catalyzes the ketonization of 2-hydroxymuconate stereoselectively to yield 2-oxo-3-hexenedioate. The chain is 2-hydroxymuconate tautomerase (nahJ) from Pseudomonas putida (Arthrobacter siderocapsulatus).